The sequence spans 281 residues: 4-diphosphocytidyl-2-C-methyl-D-erythritol kinase (281 aa).

Lys11 is a catalytic residue. 95 to 105 (PVAAGLGGGSS) serves as a coordination point for ATP. The active site involves Asp137.

The protein belongs to the GHMP kinase family. IspE subfamily.

The catalysed reaction is 4-CDP-2-C-methyl-D-erythritol + ATP = 4-CDP-2-C-methyl-D-erythritol 2-phosphate + ADP + H(+). It participates in isoprenoid biosynthesis; isopentenyl diphosphate biosynthesis via DXP pathway; isopentenyl diphosphate from 1-deoxy-D-xylulose 5-phosphate: step 3/6. In terms of biological role, catalyzes the phosphorylation of the position 2 hydroxy group of 4-diphosphocytidyl-2C-methyl-D-erythritol. This Geobacter metallireducens (strain ATCC 53774 / DSM 7210 / GS-15) protein is 4-diphosphocytidyl-2-C-methyl-D-erythritol kinase.